The primary structure comprises 1483 residues: Tyrosine-protein kinase BAZ1B (1483 aa).

One can recognise a WAC domain in the interval 20 to 126 (EPLFTIPHTQ…GEECDFEVGK (107 aa)). A disordered region spans residues 145-212 (EEATEKKSDG…TSLKKGERKW (68 aa)). 2 stretches are compositionally biased toward basic and acidic residues: residues 148–165 (TEKK…DKEN) and 172–195 (DHQK…DRAR). Serine 152, serine 158, and serine 161 each carry phosphoserine. A C motif motif is present at residues 207-213 (KGERKWA). Threonine 266 carries the phosphothreonine modification. Positions 302-333 (NPSTKRKNTGSPDRKPSKKSKTDNSSLSSPLN) are disordered. Residues serine 330, serine 345, serine 347, serine 349, serine 361, and serine 374 each carry the phosphoserine modification. 2 disordered regions span residues 379-432 (HTNF…KTPK) and 446-470 (GTQK…PHKH). 2 stretches are compositionally biased toward basic residues: residues 384 to 395 (IPKKGPPAKKPG) and 423 to 432 (SPKKGLKTPK). A coiled-coil region spans residues 533 to 586 (KRWASMSEEQRKEYLKKKREELKKKLKEKAKERREKEMLERLEKQKRYEDQELT). Residues 604 to 668 (NTLFGDVAMV…LQTLLQDEIA (65 aa)) form the DDT domain. Phosphoserine is present on residues serine 699, serine 705, serine 708, and serine 716. Residues 768-814 (TRQQMSAELWKERLAVLKEENDKKRAEKQKRKEMEAKNKENGKVENG) are a coiled coil. Residues 788-810 (NDKKRAEKQKRKEMEAKNKENGK) are compositionally biased toward basic and acidic residues. A disordered region spans residues 788–817 (NDKKRAEKQKRKEMEAKNKENGKVENGLGK). Lysine 826 is covalently cross-linked (Glycyl lysine isopeptide (Lys-Gly) (interchain with G-Cter in SUMO1); alternate). Lysine 826 is covalently cross-linked (Glycyl lysine isopeptide (Lys-Gly) (interchain with G-Cter in SUMO2); alternate). Residues 850–893 (IQAKKEREIQEREMKVKLERQAEEERIRKHKAAAEKAFQEGIAK) adopt a coiled-coil conformation. Lysine 853 participates in a covalent cross-link: Glycyl lysine isopeptide (Lys-Gly) (interchain with G-Cter in SUMO2). Serine 947 carries the post-translational modification Phosphoserine. Residues lysine 1043, lysine 1089, and lysine 1107 each participate in a glycyl lysine isopeptide (Lys-Gly) (interchain with G-Cter in SUMO2) cross-link. The segment at 1184-1234 (NARCKVCRKKGEDDKLILCDECNKAFHLFCLRPALYEVPDGEWQCPACQPA) adopts a PHD-type zinc-finger fold. The interval 1237 to 1326 (RRNSRGRNYT…PKAPPVDDAE (90 aa)) is disordered. Residues 1245 to 1283 (YTEESASEDSEDDESDEEEEEEEEEEEEEDYEVAGLRLR) are a coiled coil. Acidic residues predominate over residues 1249-1276 (SASEDSEDDESDEEEEEEEEEEEEEDYE). Composition is skewed to basic residues over residues 1282–1292 (LRPRKTIRGKH) and 1301–1316 (SGRR…RRSQ). The residue at position 1315 (serine 1315) is a Phosphoserine. Lysine 1335 bears the N6-acetyllysine mark. A Bromo domain is found at 1339–1443 (RRQSLELQKC…QCLVALLHKH (105 aa)). Phosphoserine is present on residues serine 1342 and serine 1468. The tract at residues 1455–1483 (KKFPDRLAEDEGDSEPEAVGQSRGRRQKK) is disordered.

The protein belongs to the WAL family. BAZ1B subfamily. Component of the WICH-1 ISWI chromatin remodeling complex, at least composed of SMARCA1 and BAZ1B/WSTF, which regulates the spacing of histone octamers on the DNA template to facilitate access to DNA. Within the WICH-1 ISWI chromatin remodeling complex interacts with SMARCA1; the interaction is direct. Component of the WICH-5 ISWI chromatin remodeling complex (also called the WICH complex), at least composed of SMARCA5/SNF2H and BAZ1B/WSTF, which regulates the spacing of histone octamers on the DNA template to facilitate access to DNA. Within the WICH-5 ISWI chromatin remodeling complex interacts with SMARCA5/SNF2H; the interaction is direct. Component of the B-WICH chromatin remodeling complex, at least composed of SMARCA5/SNF2H, BAZ1B/WSTF, SF3B1, DEK, MYO1C, ERCC6, MYBBP1A and DDX21. Within the B-WICH chromatin remodeling complex, interacts with SMARCA5/SNF2H, DDX21, DEK, MYBBP1A, SF3B1, ERCC6 and MYO1C. Interacts with PCNA; the interaction is direct and is required for BAZ1B/WSTF binding to replication foci during S phase. Interacts with CDT1. Mn(2+) serves as cofactor. Ubiquitously expressed with high levels of expression in heart, brain, placenta, skeletal muscle and ovary.

The protein resides in the nucleus. It carries out the reaction L-tyrosyl-[protein] + ATP = O-phospho-L-tyrosyl-[protein] + ADP + H(+). In terms of biological role, atypical tyrosine-protein kinase that plays a central role in chromatin remodeling and acts as a transcription regulator. Involved in DNA damage response by phosphorylating 'Tyr-142' of histone H2AX (H2AXY142ph). H2AXY142ph plays a central role in DNA repair and acts as a mark that distinguishes between apoptotic and repair responses to genotoxic stress. Regulatory subunit of the ATP-dependent WICH-1 and WICH-5 ISWI chromatin remodeling complexes, which form ordered nucleosome arrays on chromatin and facilitate access to DNA during DNA-templated processes such as DNA replication, transcription, and repair. Both complexes regulate the spacing of nucleosomes along the chromatin and have the ability to slide mononucleosomes to the center of a DNA template. The WICH-1 ISWI chromatin remodeling complex has a lower ATP hydrolysis rate than the WICH-5 ISWI chromatin remodeling complex. The WICH-5 ISWI chromatin-remodeling complex regulates the transcription of various genes, has a role in RNA polymerase I transcription. Within the B-WICH complex has a role in RNA polymerase III transcription. Mediates the recruitment of the WICH-5 ISWI chromatin remodeling complex to replication foci during DNA replication. The sequence is that of Tyrosine-protein kinase BAZ1B (BAZ1B) from Homo sapiens (Human).